A 430-amino-acid chain; its full sequence is Histidinol dehydrogenase (430 aa).

NAD(+) is bound by residues Tyr131, Gln192, and Asn215. Positions 238, 260, and 263 each coordinate substrate. Zn(2+) is bound by residues Gln260 and His263. Residues Glu328 and His329 each act as proton acceptor in the active site. Substrate contacts are provided by His329, Asp362, Glu416, and His421. Asp362 provides a ligand contact to Zn(2+). His421 contributes to the Zn(2+) binding site.

This sequence belongs to the histidinol dehydrogenase family. Zn(2+) serves as cofactor.

The enzyme catalyses L-histidinol + 2 NAD(+) + H2O = L-histidine + 2 NADH + 3 H(+). The protein operates within amino-acid biosynthesis; L-histidine biosynthesis; L-histidine from 5-phospho-alpha-D-ribose 1-diphosphate: step 9/9. In terms of biological role, catalyzes the sequential NAD-dependent oxidations of L-histidinol to L-histidinaldehyde and then to L-histidine. The chain is Histidinol dehydrogenase from Acinetobacter baylyi (strain ATCC 33305 / BD413 / ADP1).